A 580-amino-acid chain; its full sequence is Multidrug resistance-like ATP-binding protein MdlB (580 aa).

Positions 25–310 (IILAFFLLLS…ITIQQSILQQ (286 aa)) constitute an ABC transmembrane type-1 domain. The next 5 helical transmembrane spans lie at 26–46 (ILAF…PILI), 61–81 (FQLI…AVFF), 142–162 (VGPT…AMFT), 165–185 (WHMA…MSIY), and 258–278 (LLSA…SIGV). The region spanning 341–575 (INIKNLSFKY…KGFYWKMYNF (235 aa)) is the ABC transporter domain. 375-382 (GQTGSGKS) contributes to the ATP binding site.

It belongs to the ABC transporter superfamily. Drug exporter-2 (TC 3.A.1.117) family.

The protein resides in the cell membrane. It carries out the reaction ATP + H2O + xenobioticSide 1 = ADP + phosphate + xenobioticSide 2.. This chain is Multidrug resistance-like ATP-binding protein MdlB (mdlB), found in Buchnera aphidicola subsp. Schizaphis graminum (strain Sg).